A 58-amino-acid polypeptide reads, in one-letter code: Keratin-associated protein 19-9b (58 aa).

Residues 6-52 (GNYYGGLGYGLGGFGGFGGLGYGYGSSYGLGGYGGYGYFSPSFYGGY) are 12 X 2 AA repeats of G-[YCGS].

Belongs to the KRTAP type 19 family. In terms of assembly, interacts with hair keratins.

In the hair cortex, hair keratin intermediate filaments are embedded in an interfilamentous matrix, consisting of hair keratin-associated proteins (KRTAP), which are essential for the formation of a rigid and resistant hair shaft through their extensive disulfide bond cross-linking with abundant cysteine residues of hair keratins. The matrix proteins include the high-sulfur and high-glycine-tyrosine keratins. The protein is Keratin-associated protein 19-9b (Krtap19-9b) of Mus musculus (Mouse).